The chain runs to 337 residues: Glucose transporter 2C (337 aa).

Residues 1 to 22 (MTERRDNVSHAPDAIEGPNDGA) form a disordered region. Residues 1 to 43 (MTERRDNVSHAPDAIEGPNDGAHAEDTSPGFFSLENLGVAQVQ) lie on the Cytoplasmic side of the membrane. The helical transmembrane segment at 44-64 (VVGGTLNGFSIGFVAVYILLY) threads the bilayer. The Extracellular segment spans residues 65–119 (EVATNCSLFKTTEACKAVGSYGCEWKDTEVCSWKKECDSDSDGVNPCESLIGYSS). The N-linked (GlcNAc...) asparagine glycan is linked to asparagine 69. A helical membrane pass occupies residues 120 to 140 (LYSGIFASAMIVGSMVGSIIA). Topologically, residues 141 to 152 (GKCITMFGLKKS) are cytoplasmic. Residues 153–173 (FIIVGVMSVVASALNHISVAT) traverse the membrane as a helical segment. Residues 174-175 (NE) lie on the Extracellular side of the membrane. The helical transmembrane segment at 176-196 (FWVLCAGRVLMGIGLGVVCVI) threads the bilayer. Residues 197 to 214 (CPMYVNENAHPKLSKVDG) lie on the Cytoplasmic side of the membrane. The helical transmembrane segment at 215–235 (VLFQVFITFGIMLAAMLGLIL) threads the bilayer. Over 236 to 250 (DKTVNYDNDPDMAGR) the chain is Extracellular. The helical transmembrane segment at 251-271 (FHGFCAVSSVLSVAMFLVGMF) threads the bilayer. Residues 272–300 (LRESTATFSQDDDGKADGGMDPNEYGWGQ) lie on the Cytoplasmic side of the membrane. Residues 301–321 (MLWPLFMGAVTAGTLQLTGIN) traverse the membrane as a helical segment. Residues 322-337 (AVMNYAPKITENLGMD) lie on the Extracellular side of the membrane.

It belongs to the major facilitator superfamily. Sugar transporter (TC 2.A.1.1) family.

The protein localises to the membrane. Functionally, facilitative glucose transporter. This chain is Glucose transporter 2C (THT2C), found in Trypanosoma brucei brucei.